Here is a 371-residue protein sequence, read N- to C-terminus: Ferrochelatase (371 aa).

2 residues coordinate Fe cation: histidine 218 and glutamate 299.

It belongs to the ferrochelatase family.

The protein resides in the cytoplasm. It catalyses the reaction heme b + 2 H(+) = protoporphyrin IX + Fe(2+). Its pathway is porphyrin-containing compound metabolism; protoheme biosynthesis; protoheme from protoporphyrin-IX: step 1/1. Catalyzes the ferrous insertion into protoporphyrin IX. The polypeptide is Ferrochelatase (Cupriavidus metallidurans (strain ATCC 43123 / DSM 2839 / NBRC 102507 / CH34) (Ralstonia metallidurans)).